The chain runs to 55 residues: Small ribosomal subunit protein eS31 (55 aa).

Residues C27, C30, C45, and C48 each coordinate Zn(2+). The C4-type zinc finger occupies 27–48 (CSRCGKGFFMAQHKDRRSCGKC).

This sequence belongs to the eukaryotic ribosomal protein eS31 family. As to quaternary structure, part of the 30S ribosomal subunit. Zn(2+) is required as a cofactor.

The chain is Small ribosomal subunit protein eS31 from Cenarchaeum symbiosum (strain A).